We begin with the raw amino-acid sequence, 401 residues long: Dihydrolipoyllysine-residue succinyltransferase component of 2-oxoglutarate dehydrogenase complex (401 aa).

Residues 2–77 (SVKIIVPSLG…AVGEEIGEIN (76 aa)) enclose the Lipoyl-binding domain. Lys-43 is subject to N6-lipoyllysine. A Peripheral subunit-binding (PSBD) domain is found at 115–152 (ILAPSVQKLVTENKLDPNNIKGTGRDGRITKGDVLETI). Active-site residues include His-372 and Asp-376.

The protein belongs to the 2-oxoacid dehydrogenase family. Forms a 24-polypeptide structural core with octahedral symmetry. Part of the 2-oxoglutarate dehydrogenase (OGDH) complex composed of E1 (2-oxoglutarate dehydrogenase), E2 (dihydrolipoamide succinyltransferase) and E3 (dihydrolipoamide dehydrogenase); the complex contains multiple copies of the three enzymatic components (E1, E2 and E3). (R)-lipoate serves as cofactor.

The enzyme catalyses N(6)-[(R)-dihydrolipoyl]-L-lysyl-[protein] + succinyl-CoA = N(6)-[(R)-S(8)-succinyldihydrolipoyl]-L-lysyl-[protein] + CoA. It participates in amino-acid degradation; L-lysine degradation via saccharopine pathway; glutaryl-CoA from L-lysine: step 6/6. Functionally, E2 component of the 2-oxoglutarate dehydrogenase (OGDH) complex which catalyzes the second step in the conversion of 2-oxoglutarate to succinyl-CoA and CO(2). This is Dihydrolipoyllysine-residue succinyltransferase component of 2-oxoglutarate dehydrogenase complex (sucB) from Rickettsia felis (strain ATCC VR-1525 / URRWXCal2) (Rickettsia azadi).